The chain runs to 359 residues: Peptide methionine sulfoxide reductase MsrA/MsrB (359 aa).

The tract at residues 36–189 (RVIYLAGGCF…PGGYCHIDLK (154 aa)) is peptide methionine sulfoxide reductase A. The active site involves Cys44. The MsrB domain maps to 206–329 (DEVLKKKLTK…NSAALRFIPL (124 aa)). The active-site Nucleophile is the Cys318.

It in the N-terminal section; belongs to the MsrA Met sulfoxide reductase family. This sequence in the C-terminal section; belongs to the MsrB Met sulfoxide reductase family.

It carries out the reaction L-methionyl-[protein] + [thioredoxin]-disulfide + H2O = L-methionyl-(S)-S-oxide-[protein] + [thioredoxin]-dithiol. The enzyme catalyses [thioredoxin]-disulfide + L-methionine + H2O = L-methionine (S)-S-oxide + [thioredoxin]-dithiol. It catalyses the reaction L-methionyl-[protein] + [thioredoxin]-disulfide + H2O = L-methionyl-(R)-S-oxide-[protein] + [thioredoxin]-dithiol. Functionally, has an important function as a repair enzyme for proteins that have been inactivated by oxidation. Catalyzes the reversible oxidation-reduction of methionine sulfoxide in proteins to methionine. In Helicobacter pylori (strain J99 / ATCC 700824) (Campylobacter pylori J99), this protein is Peptide methionine sulfoxide reductase MsrA/MsrB (msrAB).